The chain runs to 35 residues: uncharacterized protein (35 aa).

The span at 1-27 (MDQNEANIYNENNENNENNENENCQNE) shows a compositional bias: low complexity. Positions 1–35 (MDQNEANIYNENNENNENNENENCQNEPIRIKIII) are disordered.

This is an uncharacterized protein from Dictyostelium discoideum (Social amoeba).